An 87-amino-acid chain; its full sequence is Small ribosomal subunit protein bS20 (87 aa).

The segment covering 1-27 (MANIKSAKKRALQSERRRQHNASRRSM) has biased composition (basic residues). The interval 1-31 (MANIKSAKKRALQSERRRQHNASRRSMTRTS) is disordered.

It belongs to the bacterial ribosomal protein bS20 family.

Its function is as follows. Binds directly to 16S ribosomal RNA. The protein is Small ribosomal subunit protein bS20 of Pseudoalteromonas atlantica (strain T6c / ATCC BAA-1087).